A 309-amino-acid chain; its full sequence is Porphobilinogen deaminase (309 aa).

C242 is modified (S-(dipyrrolylmethanemethyl)cysteine).

Belongs to the HMBS family. As to quaternary structure, monomer. Dipyrromethane is required as a cofactor.

The enzyme catalyses 4 porphobilinogen + H2O = hydroxymethylbilane + 4 NH4(+). The protein operates within porphyrin-containing compound metabolism; protoporphyrin-IX biosynthesis; coproporphyrinogen-III from 5-aminolevulinate: step 2/4. In terms of biological role, tetrapolymerization of the monopyrrole PBG into the hydroxymethylbilane pre-uroporphyrinogen in several discrete steps. This Legionella pneumophila (strain Paris) protein is Porphobilinogen deaminase.